Consider the following 134-residue polypeptide: ATP synthase epsilon chain, chloroplastic (134 aa).

This sequence belongs to the ATPase epsilon chain family. As to quaternary structure, F-type ATPases have 2 components, CF(1) - the catalytic core - and CF(0) - the membrane proton channel. CF(1) has five subunits: alpha(3), beta(3), gamma(1), delta(1), epsilon(1). CF(0) has three main subunits: a, b and c.

The protein resides in the plastid. The protein localises to the chloroplast thylakoid membrane. Produces ATP from ADP in the presence of a proton gradient across the membrane. This Phalaenopsis aphrodite subsp. formosana (Moth orchid) protein is ATP synthase epsilon chain, chloroplastic.